Here is a 343-residue protein sequence, read N- to C-terminus: Uroporphyrinogen decarboxylase (343 aa).

Substrate-binding positions include 23–27, F42, D73, Y150, S205, and H322; that span reads RQAGR.

Belongs to the uroporphyrinogen decarboxylase family. In terms of assembly, homodimer.

It is found in the cytoplasm. The catalysed reaction is uroporphyrinogen III + 4 H(+) = coproporphyrinogen III + 4 CO2. Its pathway is porphyrin-containing compound metabolism; protoporphyrin-IX biosynthesis; coproporphyrinogen-III from 5-aminolevulinate: step 4/4. Inhibited by N-ethyl-maleimide and phenylglyoxal. In terms of biological role, catalyzes the decarboxylation of four acetate groups of uroporphyrinogen-III to yield coproporphyrinogen-III. This is Uroporphyrinogen decarboxylase (hemE) from Cereibacter sphaeroides (strain ATCC 17023 / DSM 158 / JCM 6121 / CCUG 31486 / LMG 2827 / NBRC 12203 / NCIMB 8253 / ATH 2.4.1.) (Rhodobacter sphaeroides).